Here is a 235-residue protein sequence, read N- to C-terminus: Probable inactive serine protease 37 (235 aa).

Residues 1-19 form the signal peptide; sequence MKFTFCLTVLAGTFFSAHS. Positions 20–233 constitute a Peptidase S1 domain; the sequence is SVQKDDPSPY…YVSWIESTTK (214 aa). 3 disulfides stabilise this stretch: cysteine 40-cysteine 56, cysteine 131-cysteine 198, and cysteine 163-cysteine 177.

The protein belongs to the peptidase S1 family.

The protein resides in the cytoplasmic vesicle. It localises to the secretory vesicle. It is found in the acrosome. Its subcellular location is the secreted. Its function is as follows. Plays a role in male fertility. May have a role in sperm migration or binding to zona-intact eggs. Involved in the activation of the proacrosin/acrosin system. This is Probable inactive serine protease 37 from Bos taurus (Bovine).